A 143-amino-acid polypeptide reads, in one-letter code: Endoribonuclease YbeY (143 aa).

Zn(2+)-binding residues include His109, His113, and His119.

The protein belongs to the endoribonuclease YbeY family. It depends on Zn(2+) as a cofactor.

The protein localises to the cytoplasm. Its function is as follows. Single strand-specific metallo-endoribonuclease involved in late-stage 70S ribosome quality control and in maturation of the 3' terminus of the 16S rRNA. In Leptospira borgpetersenii serovar Hardjo-bovis (strain JB197), this protein is Endoribonuclease YbeY.